A 672-amino-acid polypeptide reads, in one-letter code: 2,4-dienoyl-CoA reductase [(2E)-enoyl-CoA-producing] (672 aa).

Residues 25 to 27 (SMH), glycine 59, and glutamine 101 contribute to the FMN site. Tyrosine 167 acts as the Proton donor in catalysis. Arginine 176 contributes to the substrate binding site. Arginine 215 lines the FMN pocket. 253–256 (HEAR) is a substrate binding site. FMN-binding positions include arginine 289 and 311–312 (AR). Positions 335 and 338 each coordinate [4Fe-4S] cluster. Glutamine 340 is an FAD binding site. NADP(+) is bound at residue glutamine 340. Positions 342 and 354 each coordinate [4Fe-4S] cluster. Residues alanine 385, aspartate 404, glutamine 412, lysine 422, and valine 449 each contribute to the FAD site. An NADP(+)-binding site is contributed by 563–564 (RK). Substrate is bound by residues lysine 567 and tryptophan 578. FAD contacts are provided by residues glycine 649 and 656–658 (LDA). Residue 654–656 (MEL) coordinates NADP(+).

The protein in the N-terminal section; belongs to the NADH:flavin oxidoreductase/NADH oxidase family. As to quaternary structure, monomer. It depends on FMN as a cofactor. The cofactor is FAD. [4Fe-4S] cluster serves as cofactor.

The enzyme catalyses a 4,5-saturated-(2E)-enoyl-CoA + NADP(+) = a (2E,4E)-dienoyl-CoA + NADPH + H(+). It catalyses the reaction a (2E,4Z)-dienoyl-CoA + NADPH + H(+) = a 4,5-saturated-(2E)-enoyl-CoA + NADP(+). It carries out the reaction (2E)-decenoyl-CoA + NADP(+) = (2E,4E)-decadienoyl-CoA + NADPH + H(+). The catalysed reaction is (2E)-decenoyl-CoA + NADP(+) = (2E,4Z)-decadienoyl-CoA + NADPH + H(+). It participates in lipid metabolism; fatty acid beta-oxidation. Is non-competitively inhibited by NADH. Functions as an auxiliary enzyme in the beta-oxidation of unsaturated fatty acids with double bonds at even carbon positions. Catalyzes the NADPH-dependent reduction of the C4-C5 double bond of the acyl chain of 2,4-dienoyl-CoA to yield 2-trans-enoyl-CoA. Acts on both isomers, 2-trans,4-cis- and 2-trans,4-trans-decadienoyl-CoA, with almost equal efficiency. Is not active with NADH instead of NADPH. Does not show cis-&gt;trans isomerase activity. The sequence is that of 2,4-dienoyl-CoA reductase [(2E)-enoyl-CoA-producing] from Escherichia coli (strain K12).